Here is a 351-residue protein sequence, read N- to C-terminus: Quinolinate phosphoribosyltransferase [decarboxylating] 2b, mitochondrial (351 aa).

Substrate contacts are provided by residues Arg142, 173-175 (TRK), Arg197, Lys207, Glu240, Asp267, 299-301 (SGN), and 320-322 (SGA).

Belongs to the NadC/ModD family. Expressed in roots and flowers.

It is found in the mitochondrion. It carries out the reaction nicotinate beta-D-ribonucleotide + CO2 + diphosphate = quinolinate + 5-phospho-alpha-D-ribose 1-diphosphate + 2 H(+). It functions in the pathway alkaloid biosynthesis; nicotine biosynthesis. Its pathway is cofactor biosynthesis; NAD(+) biosynthesis; nicotinate D-ribonucleotide from quinolinate: step 1/1. Involved in the biosynthesis of pyridine alkaloid natural products, leading mainly to the production of anabasine, anatabine, nicotine and nornicotine, effective deterrents against herbivores with antiparasitic and pesticide properties (neurotoxins); nornicotine serves as the precursor in the synthesis of the carcinogen compound N'-nitrosonornicotine (NNN). Involved in the catabolism of quinolinic acid (QA). The protein is Quinolinate phosphoribosyltransferase [decarboxylating] 2b, mitochondrial of Nicotiana tabacum (Common tobacco).